The primary structure comprises 806 residues: 85/88 kDa calcium-independent phospholipase A2 (806 aa).

ANK repeat units follow at residues 120–147 (WSVA…ANCA), 151–181 (EGCT…QMDV), 185–215 (KGET…GLNQ), 219–248 (QGLT…RCNI), 251–281 (PNGY…QIHS), 286–312 (YGAS…NVNS), 316–345 (AGNT…NADA), 349–378 (HGNT…EVDT), and 382–403 (FGET…KAIL). Helical transmembrane passes span 480 to 500 (LLCL…LIAI) and 511 to 531 (LFDW…ILHS). The 185-residue stretch at 481–665 (LCLDGGGVKG…LANNPTLDAM (185 aa)) folds into the PNPLA domain. Residues 485 to 490 (GGGVKG) carry the GXGXXG motif. The GXSXG signature appears at 517 to 521 (GTSTG). S519 (nucleophile) is an active-site residue. D652 serves as the catalytic Proton acceptor. Residues 652–654 (DGG) carry the DGA/G motif. The segment at 677–686 (RKGQANKVKK) is calmodulin-binding (1-9-14 motif). The calmodulin-binding (IQ motif) stretch occupies residues 748-759 (AWCEMVGIQYFR).

As to quaternary structure, homodimer formed by catalytic domains tightly interacting through a large hydrophobic interface. The contact area involves 3 alpha helices, several loops and a part of the beta sheet from each monomer. Both active sites of the dimer are in close proximity adopting an open conformation that provide sufficient space for phospholipid access and favoring cooperativity in deacylation-reacylation reactions. Each monomer has 9 ankyrin repeats stacked side-by-side in an elongated structure oriented outwards from the catalytic core. As to expression, four different transcripts were found to be expressed in a distinct tissue distribution.

The protein localises to the cytoplasm. It localises to the cell membrane. It is found in the mitochondrion. The protein resides in the cell projection. Its subcellular location is the pseudopodium. The catalysed reaction is a 1,2-diacyl-sn-glycero-3-phosphocholine + H2O = a 1-acyl-sn-glycero-3-phosphocholine + a fatty acid + H(+). It catalyses the reaction a 1-O-alkyl-2-acyl-sn-glycero-3-phosphocholine + H2O = a 1-O-alkyl-sn-glycero-3-phosphocholine + a fatty acid + H(+). It carries out the reaction 1,2-dihexadecanoyl-sn-glycero-3-phosphocholine + H2O = 1-hexadecanoyl-sn-glycero-3-phosphocholine + hexadecanoate + H(+). The enzyme catalyses 1-hexadecanoyl-2-(9Z-octadecenoyl)-sn-glycero-3-phosphocholine + H2O = 1-hexadecanoyl-sn-glycero-3-phosphocholine + (9Z)-octadecenoate + H(+). The catalysed reaction is 1-hexadecanoyl-2-(9Z,12Z-octadecadienoyl)-sn-glycero-3-phosphocholine + H2O = (9Z,12Z)-octadecadienoate + 1-hexadecanoyl-sn-glycero-3-phosphocholine + H(+). It catalyses the reaction 1-hexadecanoyl-2-(5Z,8Z,11Z,14Z-eicosatetraenoyl)-sn-glycero-3-phosphocholine + H2O = 1-hexadecanoyl-sn-glycero-3-phosphocholine + (5Z,8Z,11Z,14Z)-eicosatetraenoate + H(+). It carries out the reaction 1-octadecanoyl-2-(5Z,8Z,11Z,14Z-eicosatetraenoyl)-sn-glycero-3-phosphocholine + H2O = 1-octadecanoyl-sn-glycero-3-phosphocholine + (5Z,8Z,11Z,14Z)-eicosatetraenoate + H(+). The enzyme catalyses 1-hexadecanoyl-2-(5Z,8Z,11Z,14Z-eicosatetraenoyl)-sn-glycero-3-phosphoethanolamine + H2O = 1-hexadecanoyl-sn-glycero-3-phosphoethanolamine + (5Z,8Z,11Z,14Z)-eicosatetraenoate + H(+). The catalysed reaction is 1,2-dihexadecanoyl-sn-glycero-3-phosphate + H2O = 1-hexadecanoyl-sn-glycero-3-phosphate + hexadecanoate + H(+). It catalyses the reaction a 1-acyl-sn-glycero-3-phosphocholine + H2O = sn-glycerol 3-phosphocholine + a fatty acid + H(+). It carries out the reaction 1-hexadecanoyl-sn-glycero-3-phosphocholine + H2O = sn-glycerol 3-phosphocholine + hexadecanoate + H(+). The enzyme catalyses 1-(5Z,8Z,11Z,14Z-eicosatetraenoyl)-sn-glycero-3-phosphocholine + H2O = sn-glycerol 3-phosphocholine + (5Z,8Z,11Z,14Z)-eicosatetraenoate + H(+). The catalysed reaction is 2-(5Z,8Z,11Z,14Z)-eicosatetraenoyl-sn-glycero-3-phosphocholine + H2O = sn-glycerol 3-phosphocholine + (5Z,8Z,11Z,14Z)-eicosatetraenoate + H(+). It catalyses the reaction 1-O-hexadecyl-2-(5Z,8Z,11Z,14Z)-eicosatetraenoyl-sn-glycero-3-phosphocholine + H2O = 1-O-hexadecyl-sn-glycero-3-phosphocholine + (5Z,8Z,11Z,14Z)-eicosatetraenoate + H(+). It carries out the reaction 1-O-hexadecyl-2-acetyl-sn-glycero-3-phosphocholine + H2O = 1-O-hexadecyl-sn-glycero-3-phosphocholine + acetate + H(+). The enzyme catalyses hexadecanoyl-CoA + H2O = hexadecanoate + CoA + H(+). The catalysed reaction is 1',3'-bis[1,2-di-(9Z-octadecenoyl)-sn-glycero-3-phospho]-glycerol + H2O = 1'-[1,2-di-(9Z-octadecenoyl)-sn-glycero-3-phospho]-3'-[1-(9Z-octadecenoyl)-sn-glycero-3-phospho]-glycerol + (9Z)-octadecenoate + H(+). It catalyses the reaction 1'-[1,2-di-(9Z-octadecenoyl)-sn-glycero-3-phospho]-3'-[1-(9Z-octadecenoyl)-sn-glycero-3-phospho]-glycerol + H2O = 1',3'-bis-[1-(9Z-octadecenoyl)-sn-glycero-3-phospho]-glycerol + (9Z)-octadecenoate + H(+). It carries out the reaction 1',3'-bis-[1,2-di-(9Z,12Z-octadecadienoyl)-sn-glycero-3-phospho]-glycerol + H2O = 1'-[1,2-di-(9Z,12Z-octadecadienoyl)-sn-glycero-3-phospho]-3'-[1-(9Z,12Z-octadecadienoyl)-sn-glycero-3-phospho]-glycerol + (9Z,12Z)-octadecadienoate + H(+). The enzyme catalyses 1-octadecanoyl-2-(15-hydroxy-(5Z,8Z,11Z,13E)-eicosatetraenoyl)-sn-glycero-3-phosphoethanolamine + H2O = 1-octadecanoyl-sn-glycero-3-phosphoethanolamine + 15-hydroxy-(5Z,8Z,11Z,13E)-eicosatetraenoate + H(+). Activated by ATP. Inhibited by calcium-activated calmodulin. Inhibited by bromoenol lactone (BEL). Calcium-independent phospholipase involved in phospholipid remodeling with implications in cellular membrane homeostasis, mitochondrial integrity and signal transduction. Hydrolyzes the ester bond of the fatty acyl group attached at sn-1 or sn-2 position of phospholipids (phospholipase A1 and A2 activity respectively), producing lysophospholipids that are used in deacylation-reacylation cycles. Hydrolyzes both saturated and unsaturated long fatty acyl chains in various glycerophospholipid classes such as phosphatidylcholines, phosphatidylethanolamines and phosphatidates, with a preference for hydrolysis at sn-2 position. Can further hydrolyze lysophospholipids carrying saturated fatty acyl chains (lysophospholipase activity). Upon oxidative stress, contributes to remodeling of mitochondrial phospholipids in pancreatic beta cells, in a repair mechanism to reduce oxidized lipid content. Preferentially hydrolyzes oxidized polyunsaturated fatty acyl chains from cardiolipins, yielding monolysocardiolipins that can be reacylated with unoxidized fatty acyls to regenerate native cardiolipin species. Hydrolyzes oxidized glycerophosphoethanolamines present in pancreatic islets, releasing oxidized polyunsaturated fatty acids such as hydroxyeicosatetraenoates (HETEs). Has thioesterase activity toward fatty-acyl CoA releasing CoA-SH known to facilitate fatty acid transport and beta-oxidation in mitochondria particularly in skeletal muscle. Plays a role in regulation of membrane dynamics and homeostasis. Selectively hydrolyzes sn-2 arachidonoyl group in plasmalogen phospholipids, structural components of lipid rafts and myelin. Regulates F-actin polymerization at the pseudopods, which is required for both speed and directionality of MCP1/CCL2-induced monocyte chemotaxis. Targets membrane phospholipids to produce potent lipid signaling messengers. Generates lysophosphatidate (LPA, 1-acyl-glycerol-3-phosphate), which acts via G-protein receptors in various cell types. Has phospholipase A2 activity toward platelet-activating factor (PAF, 1-O-alkyl-2-acetyl-sn-glycero-3-phosphocholine), likely playing a role in inactivation of this potent pro-inflammatory signaling lipid. In response to glucose, amplifies calcium influx in pancreatic beta cells to promote INS secretion. Its function is as follows. Lacks the catalytic domain and may act as a negative regulator of the catalytically active isoforms. The polypeptide is 85/88 kDa calcium-independent phospholipase A2 (PLA2G6) (Homo sapiens (Human)).